We begin with the raw amino-acid sequence, 272 residues long: Homeobox protein Hox-D12 (272 aa).

Positions 204 to 263 form a DNA-binding region, homeobox; sequence SRRKRKPYTKQQIAELENEFLANEFINRQKRKELSDRLNLSDQQVKIWFQNRRMKKKRLV.

The protein belongs to the Abd-B homeobox family.

It localises to the nucleus. In terms of biological role, sequence-specific transcription factor which is part of a developmental regulatory system that provides cells with specific positional identities on the anterior-posterior axis. The protein is Homeobox protein Hox-D12 (HOXD12) of Heterodontus francisci (Horn shark).